The chain runs to 21 residues: Major outer membrane protein (21 aa).

Disulfide bond interactions within and between MOMP molecules and other components form high molecular-weight oligomers.

Its subcellular location is the cell outer membrane. Structural rigidity of the outer membrane of elementary bodies and porin forming, permitting diffusion of solutes through the intracellular reticulate body membrane. The protein is Major outer membrane protein of Actinobacillus suis.